Consider the following 343-residue polypeptide: Protein RecA (343 aa).

Position 64–71 (64–71) interacts with ATP; sequence GPESSGKT.

This sequence belongs to the RecA family.

It is found in the cytoplasm. In terms of biological role, can catalyze the hydrolysis of ATP in the presence of single-stranded DNA, the ATP-dependent uptake of single-stranded DNA by duplex DNA, and the ATP-dependent hybridization of homologous single-stranded DNAs. It interacts with LexA causing its activation and leading to its autocatalytic cleavage. The polypeptide is Protein RecA (Cereibacter sphaeroides (strain ATCC 17023 / DSM 158 / JCM 6121 / CCUG 31486 / LMG 2827 / NBRC 12203 / NCIMB 8253 / ATH 2.4.1.) (Rhodobacter sphaeroides)).